Here is a 290-residue protein sequence, read N- to C-terminus: Ribonuclease HIII (290 aa).

Residues L78 to A290 enclose the RNase H type-2 domain. Residues D84, E85, and D187 each contribute to the a divalent metal cation site.

The protein belongs to the RNase HII family. RnhC subfamily. The cofactor is Mn(2+). Requires Mg(2+) as cofactor.

It localises to the cytoplasm. The enzyme catalyses Endonucleolytic cleavage to 5'-phosphomonoester.. Its function is as follows. Endonuclease that specifically degrades the RNA of RNA-DNA hybrids. The protein is Ribonuclease HIII of Streptococcus pneumoniae (strain CGSP14).